Reading from the N-terminus, the 508-residue chain is Histidine ammonia-lyase (508 aa).

A cross-link (5-imidazolinone (Ala-Gly)) is located at residues 143–145; it reads ASG. Residue Ser144 is modified to 2,3-didehydroalanine (Ser).

Belongs to the PAL/histidase family. Post-translationally, contains an active site 4-methylidene-imidazol-5-one (MIO), which is formed autocatalytically by cyclization and dehydration of residues Ala-Ser-Gly.

The protein localises to the cytoplasm. It carries out the reaction L-histidine = trans-urocanate + NH4(+). It participates in amino-acid degradation; L-histidine degradation into L-glutamate; N-formimidoyl-L-glutamate from L-histidine: step 1/3. The polypeptide is Histidine ammonia-lyase (Anaeromyxobacter dehalogenans (strain 2CP-C)).